Consider the following 235-residue polypeptide: Orotidine 5'-phosphate decarboxylase (235 aa).

Substrate contacts are provided by residues D10, K33, 60-69 (DLKMNDIPNT), T123, R185, Q194, G214, and R215. The active-site Proton donor is the K62.

This sequence belongs to the OMP decarboxylase family. Type 1 subfamily. As to quaternary structure, homodimer.

The enzyme catalyses orotidine 5'-phosphate + H(+) = UMP + CO2. The protein operates within pyrimidine metabolism; UMP biosynthesis via de novo pathway; UMP from orotate: step 2/2. Functionally, catalyzes the decarboxylation of orotidine 5'-monophosphate (OMP) to uridine 5'-monophosphate (UMP). The sequence is that of Orotidine 5'-phosphate decarboxylase from Lactobacillus johnsonii (strain CNCM I-12250 / La1 / NCC 533).